The following is a 608-amino-acid chain: 2',5'-phosphodiesterase 12 (608 aa).

The transit peptide at 1–16 (MWRLPGRSALRGVRSV) directs the protein to the mitochondrion. The segment covering 90-99 (AAKKSRKNRA) has biased composition (basic residues). The tract at residues 90–111 (AAKKSRKNRAHSSGGAACEATG) is disordered. Residue Ser216 is modified to Phosphoserine. Mg(2+) is bound by residues Glu350, Asp495, and Asn497. Asp495 serves as the catalytic Proton donor/acceptor.

Belongs to the CCR4/nocturin family. It depends on Mg(2+) as a cofactor.

It is found in the mitochondrion matrix. It catalyses the reaction Exonucleolytic cleavage of poly(A) to 5'-AMP.. In terms of biological role, enzyme that cleaves 2',5'-phosphodiester bond linking adenosines of the 5'-triphosphorylated oligoadenylates, triphosphorylated oligoadenylates referred as 2-5A modulates the 2-5A system. Degrades triphosphorylated 2-5A to produce AMP and ATP. Also cleaves 3',5'-phosphodiester bond of oligoadenylates. Plays a role as a negative regulator of the 2-5A system that is one of the major pathways for antiviral and antitumor functions induced by interferons (IFNs). Suppression of this enzyme increases cellular 2-5A levels and decreases viral replication in cultured small-airway epithelial cells. The sequence is that of 2',5'-phosphodiesterase 12 (Pde12) from Mus musculus (Mouse).